The sequence spans 260 residues: GDNF family receptor alpha-4 (260 aa).

The N-terminal stretch at 1–23 (MAHCMESALLLLLLLGSASFTDG) is a signal peptide. N184 carries N-linked (GlcNAc...) asparagine glycosylation. T237 carries the GPI-anchor amidated threonine lipid modification. A propeptide spans 238–260 (AGCCFPRVSWLYALTALALQALL) (removed in mature form).

Belongs to the GDNFR family. Interacts with ARTN ligand and RET: forms a 2:2:2 ternary complex composed of ARTN ligand, GFRA3 and RET receptor. Interacts with SORL1. In terms of tissue distribution, expressed in many tissues including adrenal medulla, brain neurons, with highest levels in the cerebral cortex and hippocampus. Moderate levels found in the gut circular muscle and myenteric ganglia as well as in other peripheral ganglia, including the sensory dorsal root and trigeminal as well as superior cervical and sympathetic chain ganglia. Isoform a1, isoform a2, isoform b1 and isoform b2 are exclusively found in the thyroid, parthyroid and pituitary glands.

It is found in the cell membrane. The protein localises to the secreted. Functionally, receptor for persephin (PSPN), a growth factor that exhibits neurotrophic activity on mesencephalic dopaminergic and motor neurons. Acts by binding to its coreceptor, GFRA4, leading to autophosphorylation and activation of the RET receptor. May be important in C-cell development and, in the postnatal development of the adrenal medulla. The protein is GDNF family receptor alpha-4 (Gfra4) of Mus musculus (Mouse).